We begin with the raw amino-acid sequence, 420 residues long: Serine palmitoyltransferase (420 aa).

Over residues 1–21 (MKHNLQDNLQGEQMANTNSNG) the composition is skewed to polar residues. The tract at residues 1-25 (MKHNLQDNLQGEQMANTNSNGGKKP) is disordered. Pyridoxal 5'-phosphate contacts are provided by residues 132–133 (GM), histidine 233, threonine 261, and serine 263. Lysine 264 carries the N6-(pyridoxal phosphate)lysine modification.

It belongs to the class-II pyridoxal-phosphate-dependent aminotransferase family. In terms of assembly, homodimer. The cofactor is pyridoxal 5'-phosphate.

It is found in the cytoplasm. The protein localises to the cell inner membrane. The enzyme catalyses L-serine + hexadecanoyl-CoA + H(+) = 3-oxosphinganine + CO2 + CoA. It participates in lipid metabolism; sphingolipid metabolism. Significantly inhibited by palmitoyl-CoA concentrations greater than 100 uM. Its function is as follows. Catalyzes the condensation of L-serine with palmitoyl-CoA (hexadecanoyl-CoA) to produce 3-oxosphinganine. The protein is Serine palmitoyltransferase of Bacteriovorax stolpii (Bdellovibrio stolpii).